A 150-amino-acid chain; its full sequence is Ribosomal RNA large subunit methyltransferase H (150 aa).

S-adenosyl-L-methionine contacts are provided by residues L71, G100, and 118 to 123 (FSQMTF).

Belongs to the RNA methyltransferase RlmH family. Homodimer.

Its subcellular location is the cytoplasm. The enzyme catalyses pseudouridine(1915) in 23S rRNA + S-adenosyl-L-methionine = N(3)-methylpseudouridine(1915) in 23S rRNA + S-adenosyl-L-homocysteine + H(+). Specifically methylates the pseudouridine at position 1915 (m3Psi1915) in 23S rRNA. In Mycoplasmopsis agalactiae (strain NCTC 10123 / CIP 59.7 / PG2) (Mycoplasma agalactiae), this protein is Ribosomal RNA large subunit methyltransferase H.